The primary structure comprises 62 residues: UPF0339 protein Atu0232 (62 aa).

It belongs to the UPF0339 family.

The chain is UPF0339 protein Atu0232 from Agrobacterium fabrum (strain C58 / ATCC 33970) (Agrobacterium tumefaciens (strain C58)).